The sequence spans 299 residues: Serpentine receptor class gamma-30 (299 aa).

7 helical membrane-spanning segments follow: residues 18-38, 59-79, 98-118, 137-157, 189-209, 223-243, and 260-280; these read GIQFVYFIVGLGFHFAVIKVL, ILSVLIILLDLVLIRVFNYIP, ILFIEQYLQFVKSLIFCFMVV, IIPHVIVFCILCPLLGVWTAF, IISSITIVTVCICSVISMLCI, LTASALAMSIFYVFALSMNIY, and ALTAFAFDIILVCPPVIMLCL.

Belongs to the nematode receptor-like protein srg family.

Its subcellular location is the membrane. The protein is Serpentine receptor class gamma-30 (srg-30) of Caenorhabditis elegans.